Reading from the N-terminus, the 44-residue chain is Mu-conotoxin-like Cal 12.1.2f (44 aa).

Cystine bridges form between Cys-3-Cys-15, Cys-10-Cys-27, Cys-17-Cys-32, and Cys-26-Cys-38. A 6'-bromotryptophan modification is found at Trp-16. Residue Pro-22 is modified to 4-hydroxyproline. 6'-bromotryptophan occurs at positions 36 and 37. A 4-hydroxyproline modification is found at Pro-39. Position 43 is a 6'-bromotryptophan (Trp-43).

As to expression, expressed by the venom duct.

The protein localises to the secreted. Its function is as follows. Mu-conotoxins block voltage-gated sodium channels. This toxin reversibly blocks voltage-gated sodium channel in cephalopods, with no alteration in the voltage dependence of sodium conductance or on the kinetics of inactivation. This is Mu-conotoxin-like Cal 12.1.2f from Californiconus californicus (California cone).